The chain runs to 118 residues: UPF0449 protein C19orf25 (118 aa).

Tyr63 bears the Phosphotyrosine mark. Positions 81-109 (NVLRQRCELLQRAGEDLEREVAQMKQAAL) form a coiled coil.

Belongs to the UPF0449 family.

The protein is UPF0449 protein C19orf25 (C19orf25) of Homo sapiens (Human).